The chain runs to 384 residues: dTDP-dihydrostreptose--streptidine-6-phosphate dihydrostreptosyltransferase (384 aa).

The enzyme catalyses dTDP-L-dihydrostreptose + streptidine 6-phosphate = O-(1-&gt;4)-alpha-L-dihydrostreptosyl-streptidine 6-phosphate + dTDP + H(+). It functions in the pathway antibiotic biosynthesis; streptomycin biosynthesis. In terms of biological role, is probably a dihydrostreptosyl glycosyltransferase, involved in the first glycosylation step condensing streptidine-6-phosphate and dihydrostreptose. The sequence is that of dTDP-dihydrostreptose--streptidine-6-phosphate dihydrostreptosyltransferase (strH) from Streptomyces griseus.